We begin with the raw amino-acid sequence, 213 residues long: High frequency lysogenization protein HflD homolog (213 aa).

The stretch at 79 to 122 forms a coiled coil; that stretch reads QGLNAELTRYTLSLMVLERKLSSAKGALNTLGDRINGLQRQLDH.

The protein belongs to the HflD family.

It localises to the cytoplasm. It is found in the cell inner membrane. The polypeptide is High frequency lysogenization protein HflD homolog (Salmonella dublin (strain CT_02021853)).